Reading from the N-terminus, the 897-residue chain is Translation initiation factor IF-2 (897 aa).

Disordered regions lie at residues 69–88 and 95–304; these read RKTK…KEVQ and RTYV…NAMK. Basic and acidic residues predominate over residues 101–161; it reads SALEDEQRQA…EEKARIEAQQ (61 aa). A compositionally biased stretch (low complexity) spans 162-179; sequence KARQAQQPAKAAGSTAQQ. Basic and acidic residues-rich tracts occupy residues 180 to 196, 203 to 217, 226 to 239, and 277 to 286; these read EAEK…KRQQ, KAEE…EARV, WAEE…ESSD, and RREDDRDARN. Positions 287-296 are enriched in basic residues; it reads PRARKGKRGK. Positions 397–566 constitute a tr-type G domain; sequence PRAPVVTIMG…LIQSEVLELK (170 aa). A G1 region spans residues 406–413; it reads GHVDHGKT. Position 406-413 (406-413) interacts with GTP; it reads GHVDHGKT. The tract at residues 431 to 435 is G2; sequence GITQH. The segment at 452–455 is G3; that stretch reads DTPG. GTP contacts are provided by residues 452 to 456 and 506 to 509; these read DTPGH and NKID. The G4 stretch occupies residues 506-509; the sequence is NKID. Residues 542 to 544 are G5; the sequence is SAK.

Belongs to the TRAFAC class translation factor GTPase superfamily. Classic translation factor GTPase family. IF-2 subfamily.

It localises to the cytoplasm. Functionally, one of the essential components for the initiation of protein synthesis. Protects formylmethionyl-tRNA from spontaneous hydrolysis and promotes its binding to the 30S ribosomal subunits. Also involved in the hydrolysis of GTP during the formation of the 70S ribosomal complex. The chain is Translation initiation factor IF-2 from Aeromonas hydrophila subsp. hydrophila (strain ATCC 7966 / DSM 30187 / BCRC 13018 / CCUG 14551 / JCM 1027 / KCTC 2358 / NCIMB 9240 / NCTC 8049).